The following is a 339-amino-acid chain: Glycerol-3-phosphate dehydrogenase [NAD(P)+] (339 aa).

Ser-13, Trp-14, and Lys-108 together coordinate NADPH. Residues Lys-108, Gly-139, and Ser-141 each contribute to the sn-glycerol 3-phosphate site. Ala-143 provides a ligand contact to NADPH. The sn-glycerol 3-phosphate site is built by Lys-194, Asp-247, Ser-257, Arg-258, and Asn-259. The active-site Proton acceptor is Lys-194. Arg-258 lines the NADPH pocket. The NADPH site is built by Val-282 and Glu-284.

It belongs to the NAD-dependent glycerol-3-phosphate dehydrogenase family.

The protein localises to the cytoplasm. The catalysed reaction is sn-glycerol 3-phosphate + NAD(+) = dihydroxyacetone phosphate + NADH + H(+). It catalyses the reaction sn-glycerol 3-phosphate + NADP(+) = dihydroxyacetone phosphate + NADPH + H(+). It participates in membrane lipid metabolism; glycerophospholipid metabolism. Catalyzes the reduction of the glycolytic intermediate dihydroxyacetone phosphate (DHAP) to sn-glycerol 3-phosphate (G3P), the key precursor for phospholipid synthesis. This is Glycerol-3-phosphate dehydrogenase [NAD(P)+] from Streptococcus mutans serotype c (strain ATCC 700610 / UA159).